The chain runs to 37 residues: Large ribosomal subunit protein bL36 (37 aa).

Belongs to the bacterial ribosomal protein bL36 family.

The polypeptide is Large ribosomal subunit protein bL36 (Halothermothrix orenii (strain H 168 / OCM 544 / DSM 9562)).